The primary structure comprises 383 residues: Insulinoma-associated protein 1a (383 aa).

Positions 1–20 are SNAG domain; the sequence is MPRGFLVKRNKKATPVSYRV. Disordered regions lie at residues 99-141 and 229-269; these read PVDL…AMRK and RWHK…SEDG. The span at 105–120 shows a compositional bias: polar residues; that stretch reads GTSNSNRTGTTVTTKR. Positions 130 to 140 are enriched in basic residues; the sequence is KPASKKAKAMR. The C2H2-type 1 zinc finger occupies 209–231; that stretch reads YRCPECDKLFSCPANLASHRRWH. A compositionally biased stretch (basic and acidic residues) spans 244 to 256; it reads APEKEETSSDRDT. The C2H2-type 2; degenerate zinc-finger motif lies at 271–295; sequence YDCQHCGKKFKRQAYLKKHVTAHHD. 2 C2H2-type zinc fingers span residues 314 to 337 and 342 to 365; these read HLCPVCGENFPSRMSQERHIRLQH and YPCKYCPAMFYSSPGLTRHINKCH.

The protein belongs to the INSM1 family.

It is found in the nucleus. In terms of biological role, may act as a transcriptional regulator. May play a role in neurogenesis and neuroendocrine cell differentiation during embryonic development. The sequence is that of Insulinoma-associated protein 1a (insm1a) from Danio rerio (Zebrafish).